The sequence spans 476 residues: Nyctalopin (476 aa).

An N-terminal signal peptide occupies residues 1–18; sequence MLVLLLHAVVLGLPSAWA. LRR repeat units lie at residues 60-84, 85-108, 110-133, 134-157, 159-181, 182-204, 205-228, 229-252, 254-276, 277-300, and 302-324; these read VSID…PSLR, RLSL…PRLA, LRLA…SRLR, RLDL…PALR, LAAF…NLTH, AHLE…RRLR, SLSL…GVLE, HLLL…RRLR, LNLG…AELE, LLYL…SGLL, and LHLN…FFLG. A glycan (N-linked (GlcNAc...) asparagine) is linked at asparagine 92. Residue asparagine 178 is glycosylated (N-linked (GlcNAc...) asparagine). An N-linked (GlcNAc...) asparagine glycan is attached at asparagine 295. The region spanning 336–387 is the LRRCT domain; that stretch reads DCRLEWLRDWMEGSGRVTDVPCASPGSVAGLDLSQVTFGRSSDGLCVDPEEL. 3 N-linked (GlcNAc...) asparagine glycosylation sites follow: asparagine 388, asparagine 427, and asparagine 434.

It belongs to the small leucine-rich proteoglycan (SLRP) family. SLRP class IV subfamily. Expressed in kidney and retina. Also at low levels in brain, testis and muscle. Within the retina, expressed in the inner segment of photoreceptors, outer and inner nuclear layers and the ganglion cell layer.

It localises to the secreted. It is found in the extracellular space. The protein resides in the extracellular matrix. In Homo sapiens (Human), this protein is Nyctalopin (NYX).